Consider the following 195-residue polypeptide: Protein GrpE (195 aa).

It belongs to the GrpE family. As to quaternary structure, homodimer.

Its subcellular location is the cytoplasm. Functionally, participates actively in the response to hyperosmotic and heat shock by preventing the aggregation of stress-denatured proteins, in association with DnaK and GrpE. It is the nucleotide exchange factor for DnaK and may function as a thermosensor. Unfolded proteins bind initially to DnaJ; upon interaction with the DnaJ-bound protein, DnaK hydrolyzes its bound ATP, resulting in the formation of a stable complex. GrpE releases ADP from DnaK; ATP binding to DnaK triggers the release of the substrate protein, thus completing the reaction cycle. Several rounds of ATP-dependent interactions between DnaJ, DnaK and GrpE are required for fully efficient folding. The polypeptide is Protein GrpE (Blochmanniella pennsylvanica (strain BPEN)).